Here is a 1045-residue protein sequence, read N- to C-terminus: MEQLWLEHDLSEEWIPQPQEQGSDNSSEPPTTSNVNNTQSTGRGSSGTSTEHGTFKKGRNDAPDVPQWKQVNAKNPVARDIFARLDLENMFEESSKQSPPSKSPTKNPSKKSSNNSSRRSSSSVGKLSNVSNMQSSPSKDPFVSQDYEKESISSSQFSKKYSEGSLKSQQSNTRSNSVHEKQNTDHASNASSSSSVVSSPSLKPNNTSPLKLFQGASDPFTREHLNQLTQDVKSNSFENGEKQFSLPEPRRPQKPMRTTERKASLNTKDLYQEVEEVMARLRGRMPNSGRESTIFLPRKLSGLREEEEQDEISVEVSQEDSSNAFPSLSDQLHLKSLQSMKRVTSIFNDNDDSFPSASSSPQRQAYMTDKMPLREIDVGSSQSSSKTARLNSSPKSTLKTSSVKTRRSHSAQSSRKVSDYPNMVVITPADLPEGIDTTQGSMEFDRIHNRWRRKGHDSDLGFDFETDEDASLSHPERTILFKAASTRHQANNDPNNLEKQQPHSFPLRKQNVAQSEFPKHSLRDNSENAPQILSSFHDLSLQNESFDEMFNGRYENGSPIPFISSGSGLKSKADKDAEYSFSVSRQSIIQILSDVEPYEPFWKRIIQLDISRRHLDSLIGLSELCPSIEELTLEGNEIAYLTGCPVTIRDLNAVENRLSSLTSFSNLLNLQYLDISYNQLEDLTGLSSLIHLRELKVDSNHLWSLDGIQHLDGLLKLSACNNRIKELSFTNSNLHRLEELLLGNNEIEEIEEISSLQNLMVLQLDNNKLTNLKASQPMIHLRILRISNNAIHQLEVDQFPHLRTLYMDLNRFNRPPDIRRLKRLVNFSFRTQDPEASNFVIQPSLDIRNLYLSNNTFVTLDCKHMFLGVRYLELANVQLKEVPKYIATSMPNLRVLDLSHNYISDIESLKPLQMIHRLYLVGNRIKKMRNLCDILANLKQLNVLDLRMNPLNFNIYPVIDDSIYELSAASKYQQSINQKGHHRKEDPQKQWQEKELAFSSTLSEAWRTRRKMYAEAILLACPHLEWLDGSDVSQSSRAAFTKSSN.

Basic and acidic residues predominate over residues 1–11 (MEQLWLEHDLS). 2 disordered regions span residues 1–269 (MEQL…NTKD) and 282–329 (RGRM…PSLS). Positions 18-39 (PQEQGSDNSSEPPTTSNVNNTQ) are enriched in polar residues. 3 stretches are compositionally biased toward low complexity: residues 40 to 52 (STGR…STEH), 96 to 132 (KQSP…NVSN), and 152 to 165 (ISSS…SEGS). Residues 166-176 (LKSQQSNTRSN) are compositionally biased toward polar residues. Residues 187–201 (ASNASSSSSVVSSPS) show a composition bias toward low complexity. 2 stretches are compositionally biased toward polar residues: residues 226–238 (NQLT…NSFE) and 320–329 (DSSNAFPSLS). Ser-360 carries the phosphoserine modification. The tract at residues 377-417 (DVGSSQSSSKTARLNSSPKSTLKTSSVKTRRSHSAQSSRKV) is disordered. Residues 379-403 (GSSQSSSKTARLNSSPKSTLKTSSV) are compositionally biased toward polar residues. Residue Ser-558 is modified to Phosphoserine. 15 LRR repeats span residues 604-625 (RIIQ…SELC), 627-646 (SIEE…GCPV), 647-668 (TIRD…SNLL), 669-690 (NLQY…SSLI), 691-712 (HLRE…QHLD), 713-734 (GLLK…NSNL), 736-757 (RLEE…SSLQ), 758-779 (NLMV…QPMI), 780-801 (HLRI…QFPH), 802-822 (LRTL…RRLK), 846-867 (DIRN…HMFL), 868-889 (GVRY…IATS), 892-913 (NLRV…KPLQ), 914-935 (MIHR…CDIL), and 940-962 (QLNV…IDDS). One can recognise an LRRCT domain in the interval 1005–1043 (AWRTRRKMYAEAILLACPHLEWLDGSDVSQSSRAAFTKS).

As to quaternary structure, interacts with sid4. When hyperphosphorylated, interacts with byr4. Also interacts with spg1, sid2, cdc13 and cdc16. Post-translationally, phosphorylated by cdc7 and cdk1. Hyperphosphorylated during anaphase. Dephosphorylated by par1.

The protein resides in the cytoplasm. Its subcellular location is the cytoskeleton. The protein localises to the microtubule organizing center. It is found in the spindle pole body. Functionally, essential for the onset of septum formation. Involved in the organization of astral microtubules during mitosis. Acts as a bridge between sid4 and the other SIN proteins mediating their association with the spindle pole body (SPB). The sid4-cdc11 complex organizes a signaling hub on the SPB which coordinates cell and nuclear division. The protein is Septation initiation network scaffold protein cdc11 (cdc11) of Schizosaccharomyces pombe (strain 972 / ATCC 24843) (Fission yeast).